Here is a 287-residue protein sequence, read N- to C-terminus: ATP synthase gamma chain (287 aa).

This sequence belongs to the ATPase gamma chain family. As to quaternary structure, F-type ATPases have 2 components, CF(1) - the catalytic core - and CF(0) - the membrane proton channel. CF(1) has five subunits: alpha(3), beta(3), gamma(1), delta(1), epsilon(1). CF(0) has three main subunits: a, b and c.

The protein localises to the cell inner membrane. Produces ATP from ADP in the presence of a proton gradient across the membrane. The gamma chain is believed to be important in regulating ATPase activity and the flow of protons through the CF(0) complex. This chain is ATP synthase gamma chain, found in Geotalea uraniireducens (strain Rf4) (Geobacter uraniireducens).